A 360-amino-acid chain; its full sequence is DNA integrity scanning protein DisA (360 aa).

The 139-residue stretch at 11–149 (ELDLSSILQF…ENMKYTLKDI (139 aa)) folds into the DAC domain. Residues Gly78, Leu96, and 109 to 113 (MRHRT) each bind ATP.

The protein belongs to the DisA family. As to quaternary structure, homooligomer. Interacts with RadA. Mg(2+) is required as a cofactor.

The protein resides in the cytoplasm. It carries out the reaction 2 ATP = 3',3'-c-di-AMP + 2 diphosphate. Its activity is regulated as follows. Diadenylate cyclase (DAC) activity is inhibited 2-fold by Holliday junction (HJ) DNA, further addition of RecG inhibits DAC activity 11-fold; RecG may relocate DisA from the HJ. DAC is inhibited by the interaction with RadA. Diadenylate cyclase activity is not affected by ssDNA or dsDNA, but three- and four-way junctions strongly inhibit the activity of DisA, suggesting the enzyme is regulated by branched nucleic acids. Participates in a DNA-damage check-point that is active prior to asymmetric division when DNA is damaged. Forms globular foci that rapidly scan along the chromosomes during sporulation, searching for lesions. Its ability to scan through the chromosome rapidly is due to its non-specific DNA-binding. When a lesion is present, DisA pauses at the lesion site. This triggers a cellular response that culminates in a temporary block in sporulation initiation. It is required, at least partially, to inhibit the activity of the transcription factor spo0A, which controls, among others, early sporulation genes. In B.subtilis c-di-AMP is a second messenger that mediates growth, DNA repair and cell wall homeostasis; it is toxic when present in excess. Limits the replication fork reggression activity of RecG; DisA inhibits the ATPase activity of RecG. By limiting RecG-mediated fork regression, DisA provides time for removal of potentially lethal DNA lesions. Functionally, one of 3 paralogous diadenylate cyclases (DAC) in this bacteria. Has diadenylate cyclase activity, catalyzing the condensation of 2 ATP molecules into cyclic di-AMP (c-di-AMP). c-di-AMP acts as a signaling molecule that couples DNA integrity with progression of sporulation. The rise in c-di-AMP level generated by DisA while scanning the chromosome operates as a positive signal that advances sporulation; upon encountering a lesion, the DisA focus arrests at the damaged site and halts c-di-AMP synthesis. Does not convert GTP to c-di-GMP. This Bacillus subtilis (strain 168) protein is DNA integrity scanning protein DisA.